A 714-amino-acid polypeptide reads, in one-letter code: Polynucleotide 5'-hydroxyl-kinase NOL9 (714 aa).

Position 2 is an N-acetylalanine (alanine 2). The short motif at 31 to 47 is the Nucleolar localization signal element; it reads RRGRRRFGVLTRVELRR. Residues 80-133 form a disordered region; that stretch reads ARSRPAPRSPPTPSVPPAPCTASATCSLLNPRNHSTPQSRAGRPVRKVSPNVTQ. Residues 86-98 are compositionally biased toward pro residues; that stretch reads PRSPPTPSVPPAP. Residues 107 to 118 show a composition bias toward polar residues; the sequence is LLNPRNHSTPQS. Phosphoserine is present on serine 128. 322–329 contributes to the ATP binding site; sequence GACDIGKS. Residues 495 to 714 are interaction with LAS1L; it reads FTYEEKESSP…PRHKLRQRRK (220 aa). Lysine 500 is covalently cross-linked (Glycyl lysine isopeptide (Lys-Gly) (interchain with G-Cter in SUMO2)). Serine 502 carries the post-translational modification Phosphoserine.

The protein belongs to the Clp1 family. NOL9/GRC3 subfamily. In terms of assembly, interacts with PELP1, WDR18 and SENP3. Interacts with LAS1L to form an ITS2 pre-rRNA endonuclease-kinase complex.

Its subcellular location is the nucleus. It is found in the nucleolus. The enzyme catalyses a 5'-end dephospho-2'-deoxyribonucleoside-DNA + ATP = a 5'-end 5'-phospho-2'-deoxyribonucleoside-DNA + ADP + H(+). It carries out the reaction a 5'-end dephospho-ribonucleoside-RNA + ATP = a 5'-end 5'-phospho-ribonucleoside-RNA + ADP + H(+). Functionally, polynucleotide kinase that can phosphorylate the 5'-hydroxyl groups of single-stranded and double-stranded RNA and DNA substrates. Involved in rRNA processing and its kinase activity is required for the processing of the 32S precursor into 5.8S and 28S rRNAs, more specifically for the generation of the major 5.8S(S) form. Required for the efficient pre-rRNA processing of internal transcribed spacer 2 (ITS2). Associates with LAS1L to form an ITS2 pre-rRNA endonuclease-kinase complex and is responsible for the transport of this complex into the nucleolus. The sequence is that of Polynucleotide 5'-hydroxyl-kinase NOL9 from Mus musculus (Mouse).